Reading from the N-terminus, the 185-residue chain is F-box protein At1g61340 (185 aa).

Residues 78-126 (SRELEDLPLDILVRIICGVEHEDLKQLFHVSKTIREATMIAKQSHFAYS) form the F-box domain.

In Arabidopsis thaliana (Mouse-ear cress), this protein is F-box protein At1g61340.